A 382-amino-acid polypeptide reads, in one-letter code: D-galactonate dehydratase (382 aa).

A Mg(2+)-binding site is contributed by aspartate 183. Histidine 185 serves as the catalytic Proton donor. Mg(2+) contacts are provided by glutamate 209 and glutamate 235. The Proton acceptor role is filled by histidine 285.

This sequence belongs to the mandelate racemase/muconate lactonizing enzyme family. GalD subfamily. The cofactor is Mg(2+).

It catalyses the reaction D-galactonate = 2-dehydro-3-deoxy-D-galactonate + H2O. The protein operates within carbohydrate acid metabolism; D-galactonate degradation; D-glyceraldehyde 3-phosphate and pyruvate from D-galactonate: step 1/3. Functionally, catalyzes the dehydration of D-galactonate to 2-keto-3-deoxy-D-galactonate. This Xanthomonas campestris pv. campestris (strain 8004) protein is D-galactonate dehydratase.